The following is a 137-amino-acid chain: Small ribosomal subunit protein uS12 (137 aa).

Disordered regions lie at residues 1-21 (MPTI…KSDS) and 36-57 (TKLS…TPKK). Asp102 is modified (3-methylthioaspartic acid).

The protein belongs to the universal ribosomal protein uS12 family. In terms of assembly, part of the 30S ribosomal subunit. Contacts proteins S8 and S17. May interact with IF1 in the 30S initiation complex.

Its function is as follows. With S4 and S5 plays an important role in translational accuracy. Functionally, interacts with and stabilizes bases of the 16S rRNA that are involved in tRNA selection in the A site and with the mRNA backbone. Located at the interface of the 30S and 50S subunits, it traverses the body of the 30S subunit contacting proteins on the other side and probably holding the rRNA structure together. The combined cluster of proteins S8, S12 and S17 appears to hold together the shoulder and platform of the 30S subunit. In Streptococcus agalactiae serotype Ia (strain ATCC 27591 / A909 / CDC SS700), this protein is Small ribosomal subunit protein uS12.